A 1014-amino-acid polypeptide reads, in one-letter code: RNA-directed RNA polymerase (1014 aa).

One can recognise a RdRp catalytic domain in the interval 618-740 (HELEEGDYTC…ANHQGEFHSY (123 aa)). Residues 918–1014 (KEEDERQPET…TLVFKNSSLS (97 aa)) form a disordered region. Residues 956–967 (KGKRKVKGRRPR) are compositionally biased toward basic residues.

Belongs to the nodaviridae RNA polymerase family.

It catalyses the reaction RNA(n) + a ribonucleoside 5'-triphosphate = RNA(n+1) + diphosphate. Functionally, RNA-dependent RNA polymerase which replicates the viral genome composed of 2 RNA segments, RNA1 and RNA2. This Pieris rapae (Small white butterfly) protein is RNA-directed RNA polymerase.